We begin with the raw amino-acid sequence, 389 residues long: MSDIAPVTNTPYIPPTPEVGLPLWLLAELTYRCPLQCPYCSNPLDFAKQGQELTTEQWFKVMQEAREMGAAQIGFSGGEPLVRQDLAELIAEARRLGFYTNLITSGIGLTKEKIIAFKEAGLDHIQISFQASDEQVNNMLAGSKKAFAQKLEMAKAVKKHGYPMVLNFVTHRHNIDRIDKIIELCLALEADFVELATCQFYGWAHLNRLGLLPTKDQLVRAEAVTNEYRVRLEAENHPCKLIFVTPDYYEERPKACMNGWGNIFLTVTPDGTALPCHGARQMPIQFPNVRDYSMQHIWYDSFGFNRFRGYDWMPEPCRSCDEKEKDFGGCRCQAFMLTGDAANADPVCSKSYHHGIITQARDESETATQTIEELAFRNDRNSRLIAKSS.

Residues 19 to 235 form the Radical SAM core domain; that stretch reads VGLPLWLLAE…NEYRVRLEAE (217 aa). [4Fe-4S] cluster contacts are provided by C33, C37, and C40.

Belongs to the radical SAM superfamily. PqqE family. As to quaternary structure, interacts with PqqD. The interaction is necessary for activity of PqqE. Requires [4Fe-4S] cluster as cofactor.

It catalyses the reaction [PQQ precursor protein] + S-adenosyl-L-methionine = E-Y cross-linked-[PQQ precursor protein] + 5'-deoxyadenosine + L-methionine + H(+). It participates in cofactor biosynthesis; pyrroloquinoline quinone biosynthesis. In terms of biological role, catalyzes the cross-linking of a glutamate residue and a tyrosine residue in the PqqA protein as part of the biosynthesis of pyrroloquinoline quinone (PQQ). This is PqqA peptide cyclase from Pseudomonas savastanoi pv. phaseolicola (strain 1448A / Race 6) (Pseudomonas syringae pv. phaseolicola (strain 1448A / Race 6)).